Reading from the N-terminus, the 283-residue chain is 4-diphosphocytidyl-2-C-methyl-D-erythritol kinase (283 aa).

Residue lysine 10 is part of the active site. Residue 99–109 (PMGGGLGGGSS) coordinates ATP. Aspartate 141 is a catalytic residue.

The protein belongs to the GHMP kinase family. IspE subfamily. In terms of assembly, homodimer.

The enzyme catalyses 4-CDP-2-C-methyl-D-erythritol + ATP = 4-CDP-2-C-methyl-D-erythritol 2-phosphate + ADP + H(+). It functions in the pathway isoprenoid biosynthesis; isopentenyl diphosphate biosynthesis via DXP pathway; isopentenyl diphosphate from 1-deoxy-D-xylulose 5-phosphate: step 3/6. Catalyzes the phosphorylation of the position 2 hydroxy group of 4-diphosphocytidyl-2C-methyl-D-erythritol. The chain is 4-diphosphocytidyl-2-C-methyl-D-erythritol kinase from Salmonella gallinarum (strain 287/91 / NCTC 13346).